Reading from the N-terminus, the 516-residue chain is MEREPGAAGVRRALGRRLEAVLASRSEANAVFDILAVLQSEDQEEIQEAVRTCSRLFGALLERGELFVGQLPSEEMVMTGSQGATRKYKVWMRHRYHSCCNRLGELLGHPSFQVKELALSALLKFVQLEGAHPLEKSKWEGNYLFPRELFKLVVGGLLSPEEDQSLLLSQFREYLDYDDTRYHTMQAAVDAVARVTGQHPEVPPAFWNNAFTLLSAVSLPRREPTVSSFYVKRAELWDTWKVAHLKEHRRVFQAMWLSFLKHKLPLSLYKKVLLIVHDAILPQLAQPTLMIDFLTRACDLGGALSLLALNGLFILIHKHNLEYPDFYRKLYGLLDPSVFHVKYRARFFHLADLFLSSSHLPAYLVAAFAKRLARLALTAPPEALLMVLPFICNLLRRHPACRVLVHRPHGPELDADPYDPGEEDPAQSRALESSLWELQALQRHYHPEVSKAASVINQALSMPEVSIAPLLELTAYEIFERDLKKKGPEPVPLEFIPAQGLLGRPGELCAQHFTLS.

A run of 3 helical transmembrane segments spans residues A297 to H317, F347 to A367, and L375 to L395.

The protein belongs to the CBF/MAK21 family.

The protein resides in the nucleus membrane. It localises to the nucleus. The protein localises to the nucleolus. The protein is Nucleolar complex protein 4 homolog (NOC4L) of Homo sapiens (Human).